The sequence spans 417 residues: Serine/threonine-protein kinase SBK1 (417 aa).

A Protein kinase domain is found at tyrosine 53–threonine 318. ATP-binding positions include leucine 59 to valine 67 and lysine 82. Residue aspartate 174 is the Proton acceptor of the active site. The interval leucine 321 to glycine 405 is disordered. The span at proline 363–valine 382 shows a compositional bias: pro residues.

This sequence belongs to the protein kinase superfamily. Ser/Thr protein kinase family.

Its subcellular location is the cytoplasm. It carries out the reaction L-seryl-[protein] + ATP = O-phospho-L-seryl-[protein] + ADP + H(+). It catalyses the reaction L-threonyl-[protein] + ATP = O-phospho-L-threonyl-[protein] + ADP + H(+). Its function is as follows. May be involved in signal-transduction pathways related to the control of brain development. This Mus musculus (Mouse) protein is Serine/threonine-protein kinase SBK1 (Sbk1).